The following is an 86-amino-acid chain: Colicin-E2 immunity protein (86 aa).

The protein belongs to the colicins ColE2/ColE8/ColE9 and pyocins S1/S2 family.

This protein is able to protect a cell, which harbors the plasmid ColE2 encoding colicin E2, against colicin E2. The protein is Colicin-E2 immunity protein (imm) of Escherichia coli.